Reading from the N-terminus, the 484-residue chain is Probable cytochrome P450 508A1 (484 aa).

Residues 1–21 (MALFEIIISLFVVYIIHNAIS) traverse the membrane as a helical segment. Cys428 serves as a coordination point for heme.

Belongs to the cytochrome P450 family. Requires heme as cofactor.

Its subcellular location is the membrane. The polypeptide is Probable cytochrome P450 508A1 (cyp508A1-1) (Dictyostelium discoideum (Social amoeba)).